The sequence spans 408 residues: Tyrosine--tRNA ligase (408 aa).

A 'HIGH' region motif is present at residues 50 to 59 (PTGKDLTLGH). The short motif at 234–238 (KMSKS) is the 'KMSKS' region element. An ATP-binding site is contributed by lysine 237. One can recognise an S4 RNA-binding domain in the interval 346–407 (MQAARVLFTA…GKRKYGRVVL (62 aa)).

This sequence belongs to the class-I aminoacyl-tRNA synthetase family. TyrS type 2 subfamily. As to quaternary structure, homodimer.

Its subcellular location is the cytoplasm. It carries out the reaction tRNA(Tyr) + L-tyrosine + ATP = L-tyrosyl-tRNA(Tyr) + AMP + diphosphate + H(+). In terms of biological role, catalyzes the attachment of tyrosine to tRNA(Tyr) in a two-step reaction: tyrosine is first activated by ATP to form Tyr-AMP and then transferred to the acceptor end of tRNA(Tyr). This chain is Tyrosine--tRNA ligase, found in Symbiobacterium thermophilum (strain DSM 24528 / JCM 14929 / IAM 14863 / T).